The chain runs to 339 residues: Glycerol-3-phosphate dehydrogenase [NAD(P)+] (339 aa).

NADPH is bound by residues S15, Y16, H36, and K110. The sn-glycerol 3-phosphate site is built by K110, G139, and T141. A143 contacts NADPH. 5 residues coordinate sn-glycerol 3-phosphate: K195, D248, S258, R259, and N260. The active-site Proton acceptor is the K195. R259 is an NADPH binding site. NADPH contacts are provided by V283 and E285.

This sequence belongs to the NAD-dependent glycerol-3-phosphate dehydrogenase family.

The protein resides in the cytoplasm. The catalysed reaction is sn-glycerol 3-phosphate + NAD(+) = dihydroxyacetone phosphate + NADH + H(+). The enzyme catalyses sn-glycerol 3-phosphate + NADP(+) = dihydroxyacetone phosphate + NADPH + H(+). The protein operates within membrane lipid metabolism; glycerophospholipid metabolism. Catalyzes the reduction of the glycolytic intermediate dihydroxyacetone phosphate (DHAP) to sn-glycerol 3-phosphate (G3P), the key precursor for phospholipid synthesis. This chain is Glycerol-3-phosphate dehydrogenase [NAD(P)+], found in Shigella boydii serotype 18 (strain CDC 3083-94 / BS512).